The following is a 669-amino-acid chain: UvrABC system protein C (669 aa).

The region spanning 14-91 (DSPGCYLHKD…IQRYKPKYNI (78 aa)) is the GIY-YIG domain. A UVR domain is found at 196 to 231 (KKIVKELEGKMISASDNMEFEQAAEYRDVIKAIGTL). Residues 647–669 (PHKSDENWESIKDNVPLLKSEKS) form a disordered region. The span at 648-658 (HKSDENWESIK) shows a compositional bias: basic and acidic residues.

The protein belongs to the UvrC family. Interacts with UvrB in an incision complex.

The protein localises to the cytoplasm. The UvrABC repair system catalyzes the recognition and processing of DNA lesions. UvrC both incises the 5' and 3' sides of the lesion. The N-terminal half is responsible for the 3' incision and the C-terminal half is responsible for the 5' incision. This Lactococcus lactis subsp. cremoris (strain MG1363) protein is UvrABC system protein C.